The sequence spans 85 residues: Putative regulatory protein THEYE_A0405 (85 aa).

The protein belongs to the RemA family.

This chain is Putative regulatory protein THEYE_A0405, found in Thermodesulfovibrio yellowstonii (strain ATCC 51303 / DSM 11347 / YP87).